The primary structure comprises 327 residues: Undecaprenyl-phosphate 4-deoxy-4-formamido-L-arabinose transferase (327 aa).

At 1 to 235 (MFDAAPIKKV…TCLTTTPLRL (235 aa)) the chain is on the cytoplasmic side. Residues 236–256 (LSLLGSVIAIGGFSLSVLLIV) traverse the membrane as a helical segment. The Periplasmic portion of the chain corresponds to 257–269 (LRLALGPQWAAEG). Residues 270 to 290 (VFMLFAVLFTFIGAQFIGMGL) traverse the membrane as a helical segment. Over 291–327 (LGEYIGRIYNDVRARPRYFVQQVIYPESTPFTEESHQ) the chain is Cytoplasmic.

It belongs to the glycosyltransferase 2 family.

The protein resides in the cell inner membrane. It catalyses the reaction UDP-4-deoxy-4-formamido-beta-L-arabinose + di-trans,octa-cis-undecaprenyl phosphate = 4-deoxy-4-formamido-alpha-L-arabinopyranosyl di-trans,octa-cis-undecaprenyl phosphate + UDP. It functions in the pathway glycolipid biosynthesis; 4-amino-4-deoxy-alpha-L-arabinose undecaprenyl phosphate biosynthesis; 4-amino-4-deoxy-alpha-L-arabinose undecaprenyl phosphate from UDP-4-deoxy-4-formamido-beta-L-arabinose and undecaprenyl phosphate: step 1/2. The protein operates within bacterial outer membrane biogenesis; lipopolysaccharide biosynthesis. Functionally, catalyzes the transfer of 4-deoxy-4-formamido-L-arabinose from UDP to undecaprenyl phosphate. The modified arabinose is attached to lipid A and is required for resistance to polymyxin and cationic antimicrobial peptides. The sequence is that of Undecaprenyl-phosphate 4-deoxy-4-formamido-L-arabinose transferase from Salmonella dublin (strain CT_02021853).